The sequence spans 821 residues: DNA replication licensing factor MCM6 (821 aa).

Met-1 bears the N-acetylmethionine mark. 3 positions are modified to phosphoserine: Ser-13, Ser-219, and Ser-271. The residue at position 278 (Thr-278) is a Phosphothreonine. The MCM domain maps to 346 to 553 (LYHNLCTSLF…TDYAIARRIV (208 aa)). Residues His-359, Ser-399, Thr-400, Ala-401, Lys-402, Ser-403, and Asn-504 each contribute to the ATP site. An Arginine finger motif is present at residues 528–531 (SRFD). Residues Arg-619 and Glu-622 each contribute to the ADP site. Lys-643 carries the post-translational modification N6-acetyllysine. The disordered stretch occupies residues 676-708 (TDEGQGGVNGHADSPAPVNRFNGSSEDASQETV). Ser-689, Ser-704, and Ser-762 each carry phosphoserine. Residues 696–708 (FNGSSEDASQETV) are compositionally biased toward polar residues. Residue Thr-791 is modified to Phosphothreonine.

This sequence belongs to the MCM family. Component of the MCM2-7 complex. The complex forms a toroidal hexameric ring with the proposed subunit order MCM2-MCM6-MCM4-MCM7-MCM3-MCM5. Component of the CMG helicase complex, a hexameric ring of related MCM2-7 subunits stabilized by CDC45 and the tetrameric GINS complex. May interact with MCM10. Interacts with TIPIN. Interacts with CDT1. Interacts with MCMBP. Interacts with DDI2. O-glycosylated (O-GlcNAcylated), in a cell cycle-dependent manner.

The protein localises to the nucleus. The protein resides in the chromosome. It catalyses the reaction ATP + H2O = ADP + phosphate + H(+). Functionally, acts as a component of the MCM2-7 complex (MCM complex) which is the replicative helicase essential for 'once per cell cycle' DNA replication initiation and elongation in eukaryotic cells. Core component of CDC45-MCM-GINS (CMG) helicase, the molecular machine that unwinds template DNA during replication, and around which the replisome is built. The active ATPase sites in the MCM2-7 ring are formed through the interaction surfaces of two neighboring subunits such that a critical structure of a conserved arginine finger motif is provided in trans relative to the ATP-binding site of the Walker A box of the adjacent subunit. The six ATPase active sites, however, are likely to contribute differentially to the complex helicase activity. The polypeptide is DNA replication licensing factor MCM6 (Mcm6) (Mus musculus (Mouse)).